The primary structure comprises 410 residues: LL-diaminopimelate aminotransferase (410 aa).

Positions 15 and 42 each coordinate substrate. Pyridoxal 5'-phosphate is bound by residues Y72, 108-109, Y132, N187, Y218, and 246-248; these read AK and SFS. Substrate-binding residues include K109, Y132, and N187. The residue at position 249 (K249) is an N6-(pyridoxal phosphate)lysine. The pyridoxal 5'-phosphate site is built by R257 and N292. The substrate site is built by N292 and R388.

It belongs to the class-I pyridoxal-phosphate-dependent aminotransferase family. LL-diaminopimelate aminotransferase subfamily. In terms of assembly, homodimer. The cofactor is pyridoxal 5'-phosphate.

It carries out the reaction (2S,6S)-2,6-diaminopimelate + 2-oxoglutarate = (S)-2,3,4,5-tetrahydrodipicolinate + L-glutamate + H2O + H(+). Its pathway is amino-acid biosynthesis; L-lysine biosynthesis via DAP pathway; LL-2,6-diaminopimelate from (S)-tetrahydrodipicolinate (aminotransferase route): step 1/1. Involved in the synthesis of meso-diaminopimelate (m-DAP or DL-DAP), required for both lysine and peptidoglycan biosynthesis. Catalyzes the direct conversion of tetrahydrodipicolinate to LL-diaminopimelate. Can also use m-DAP instead of LL-DAP as the amino-group donor. The chain is LL-diaminopimelate aminotransferase from Acetivibrio thermocellus (strain ATCC 27405 / DSM 1237 / JCM 9322 / NBRC 103400 / NCIMB 10682 / NRRL B-4536 / VPI 7372) (Clostridium thermocellum).